The chain runs to 357 residues: Arginine kinase (357 aa).

A2 is modified (N-acetylalanine). The 83-residue stretch at K9 to K91 folds into the Phosphagen kinase N-terminal domain. G64–Y68 is a binding site for L-arginine. One can recognise a Phosphagen kinase C-terminal domain in the interval F119–M356. Residues S122–R126 and H185 each bind ATP. L-arginine is bound at residue E225. R229 contributes to the ATP binding site. Residue C271 participates in L-arginine binding. ATP-binding positions include R280 to H284 and R309 to E314. E314 lines the L-arginine pocket.

The protein belongs to the ATP:guanido phosphotransferase family.

The catalysed reaction is L-arginine + ATP = N(omega)-phospho-L-arginine + ADP + H(+). This is Arginine kinase from Eriocheir sinensis (Chinese mitten crab).